Reading from the N-terminus, the 308-residue chain is Ribosomal RNA large subunit methyltransferase F (308 aa).

It belongs to the methyltransferase superfamily. METTL16/RlmF family.

It is found in the cytoplasm. The catalysed reaction is adenosine(1618) in 23S rRNA + S-adenosyl-L-methionine = N(6)-methyladenosine(1618) in 23S rRNA + S-adenosyl-L-homocysteine + H(+). Its function is as follows. Specifically methylates the adenine in position 1618 of 23S rRNA. This is Ribosomal RNA large subunit methyltransferase F from Escherichia coli (strain K12 / MC4100 / BW2952).